Consider the following 398-residue polypeptide: Mitogen-activated protein kinase 1 (398 aa).

Residues 1–26 (MDAGAQPPDTEMAEAGGGQQPPAAAA) are disordered. Residues 67–352 (KPPILPIGKG…VEGALAHPYL (286 aa)) enclose the Protein kinase domain. Residues 73-81 (IGKGAYGIV) and lysine 96 contribute to the ATP site. The active-site Proton acceptor is aspartate 193. Threonine 225 is modified (phosphothreonine). The short motif at 225 to 227 (TEY) is the TXY element. Tyrosine 227 carries the phosphotyrosine modification.

This sequence belongs to the protein kinase superfamily. CMGC Ser/Thr protein kinase family. MAP kinase subfamily. As to quaternary structure, may interact with RAC1. Dually phosphorylated on Thr-225 and Tyr-227, which activates the enzyme.

It carries out the reaction L-seryl-[protein] + ATP = O-phospho-L-seryl-[protein] + ADP + H(+). The catalysed reaction is L-threonyl-[protein] + ATP = O-phospho-L-threonyl-[protein] + ADP + H(+). Activated by threonine and tyrosine phosphorylation. Activated in response to sphingolipid elicitor (SE). Its function is as follows. Involved in sphingolipid elicitor (SE)-dependent defense signaling pathway. Acts downstream of heterotrimeric G protein alpha subunit and small GTPase RAC1. May regulate the expression of various genes involved in biotic and abiotic stress response. Involved in an abscisic acid signaling pathway that regulates the activities of antioxidant enzymes and the production of hydrogen peroxide. Acts downstream of CCAMK. This chain is Mitogen-activated protein kinase 1 (MPK1), found in Oryza sativa subsp. japonica (Rice).